A 179-amino-acid polypeptide reads, in one-letter code: MSSRVLTPDVVGIDALVHDHQTVLAKAEGGVVAVFANNAPAFYAVTPARLAELLALEEKLARPGSDVALDDQLYQEPQAAPVAVPMGKFAMYPDWQPDADFIRLAALWGVALREPVTTEELTSFIAYWQAEGKVFHHVQWQQKLARSLQIGRASNGGLPKRDVNTVSEPDSQIPPGFRG.

The segment at 155–179 (NGGLPKRDVNTVSEPDSQIPPGFRG) is disordered.

This sequence belongs to the DnaT family. In terms of assembly, homooligomerizes. Interacts with PriB. Component of the replication restart primosome. Primosome assembly occurs via a 'hand-off' mechanism. PriA binds to replication forks, subsequently PriB then DnaT bind; DnaT then displaces ssDNA to generate the helicase loading substrate.

Its function is as follows. Involved in the restart of stalled replication forks, which reloads the replicative helicase on sites other than the origin of replication. Can function in multiple replication restart pathways. Displaces ssDNA from a PriB-ssDNA complex. Probably forms a spiral filament on ssDNA. This chain is Replication restart protein DnaT, found in Escherichia coli O8 (strain IAI1).